A 541-amino-acid chain; its full sequence is Tegument protein UL21 homolog (541 aa).

Belongs to the alphaherpesvirinae UL21 protein family. Interacts (via C-terminus) with UL16.

The protein localises to the virion tegument. The protein resides in the host cytoplasm. Its subcellular location is the host nucleus. May participate in DNA packaging/capsid maturation events. Promotes efficient incorporation of tegument proteins UL46, UL49, and US3 homologs into virions. May also play a role in capsid transport to the trans-Golgi network (TGN). The sequence is that of Tegument protein UL21 homolog from Varicella-zoster virus (strain Oka vaccine) (HHV-3).